A 61-amino-acid polypeptide reads, in one-letter code: Large ribosomal subunit protein bL28 (61 aa).

A disordered region spans residues 1–26 (MAKDFLNGKRTHFGNKRSHALNSSRR). A compositionally biased stretch (basic residues) spans 9-19 (KRTHFGNKRSH).

Belongs to the bacterial ribosomal protein bL28 family.

The sequence is that of Large ribosomal subunit protein bL28 from Levilactobacillus brevis (strain ATCC 367 / BCRC 12310 / CIP 105137 / JCM 1170 / LMG 11437 / NCIMB 947 / NCTC 947) (Lactobacillus brevis).